Here is a 174-residue protein sequence, read N- to C-terminus: uncharacterized protein (174 aa).

2 helical membrane-spanning segments follow: residues 29–51 (FAVE…GFWY) and 66–83 (VIVI…VTKI).

The protein resides in the cell membrane. This is an uncharacterized protein from Bacillus subtilis (strain 168).